We begin with the raw amino-acid sequence, 493 residues long: Probable cytochrome P450 313a2 (493 aa).

Cys438 serves as a coordination point for heme.

Belongs to the cytochrome P450 family. The cofactor is heme.

It is found in the endoplasmic reticulum membrane. It localises to the microsome membrane. In terms of biological role, may be involved in the metabolism of insect hormones and in the breakdown of synthetic insecticides. The polypeptide is Probable cytochrome P450 313a2 (Cyp313a2) (Drosophila melanogaster (Fruit fly)).